Consider the following 654-residue polypeptide: Probable Xaa-Pro aminopeptidase P (654 aa).

Aspartate 451, aspartate 462, glutamate 560, and glutamate 574 together coordinate Mn(2+).

This sequence belongs to the peptidase M24B family. It depends on Mn(2+) as a cofactor.

It carries out the reaction Release of any N-terminal amino acid, including proline, that is linked to proline, even from a dipeptide or tripeptide.. Catalyzes the removal of a penultimate prolyl residue from the N-termini of peptides. The polypeptide is Probable Xaa-Pro aminopeptidase P (ampp) (Botryotinia fuckeliana (strain B05.10) (Noble rot fungus)).